The sequence spans 249 residues: MELARHSFQQPLNVAPSLSNVVNKTSVVLQQQSVIQPNQHQLQHQLQTMHDGGIDGKRREILARRPSYRRILDDLAGDGPVKMENYDDTGSSGESSPNGNNEEDINGINQSVSHQEKQYQSIHLNGIVSSVQGGENSLNQLHDSQPGDNQYIITTQGPDNKIQAYTIKGTLPIGLDNTSLASPHQLAEEATRKRELRLYKNREAARECRRKKKEYVKCLENRVAVLENQNKALIEELKSLKDLYCSKGD.

A KID domain is found at 35–94 (IQPNQHQLQHQLQTMHDGGIDGKRREILARRPSYRRILDDLAGDGPVKMENYDDTGSSGE). The segment at 73–106 (DDLAGDGPVKMENYDDTGSSGESSPNGNNEEDIN) is disordered. A compositionally biased stretch (low complexity) spans 90–100 (GSSGESSPNGN). The bZIP domain occupies 191-249 (TRKRELRLYKNREAARECRRKKKEYVKCLENRVAVLENQNKALIEELKSLKDLYCSKGD). Residues 192 to 217 (RKRELRLYKNREAARECRRKKKEYVK) form a basic motif region. Positions 219–240 (LENRVAVLENQNKALIEELKSL) are leucine-zipper.

It belongs to the bZIP family. In terms of assembly, binds DNA as a dimer.

It is found in the nucleus. Its function is as follows. This protein binds the cAMP response element (CRE), sequence present in many viral and cellular promoters. Could regulate the transcriptional activity of genes involved in regeneration processes. The sequence is that of Cyclic AMP-responsive element-binding protein (CREB) from Hydra viridissima (Green hydra).